Reading from the N-terminus, the 642-residue chain is Threonine--tRNA ligase (642 aa).

Residues 1-61 form the TGS domain; the sequence is MPVITLPDGS…ENDATLSIIT (61 aa). The tract at residues 243–534 is catalytic; the sequence is DHRKIGKQLD…LTEEFAGFFP (292 aa). Zn(2+) contacts are provided by cysteine 334, histidine 385, and histidine 511.

It belongs to the class-II aminoacyl-tRNA synthetase family. In terms of assembly, homodimer. It depends on Zn(2+) as a cofactor.

Its subcellular location is the cytoplasm. It carries out the reaction tRNA(Thr) + L-threonine + ATP = L-threonyl-tRNA(Thr) + AMP + diphosphate + H(+). In terms of biological role, catalyzes the attachment of threonine to tRNA(Thr) in a two-step reaction: L-threonine is first activated by ATP to form Thr-AMP and then transferred to the acceptor end of tRNA(Thr). Also edits incorrectly charged L-seryl-tRNA(Thr). The polypeptide is Threonine--tRNA ligase (Salmonella agona (strain SL483)).